A 2294-amino-acid chain; its full sequence is MKRHPLKSWIFELREILREIKNSHYFLDSWTKFDSVGSFTHIFFHQERFMKLFDPRIWSILLSRDSQGLTSNRYFTIKGVVLLAVAVLIYRINSRNMVERKNIYLMGLLPIPMNSIGPRNDALEESFGSSNINRLIVSLLYLPKGKKISESCFMDPKESTLVLPITKKCIMPESNWGSRWRRNQIGKRRDSSCKISNETVAGIEISFKEKDLKYLESPFVSYTDDPIRKDHDWELFDRLSPRKKRNIINLNSGQLFEILVKHWICYLMSAFREKRPIEVEGFFKQQGAGSTIQSNDIERVSHLLSRNKWGISLQNCAQFHMWQFRQDLFVSWGKNPHELDFLRNVSRENWIWLDSVRLVNKDRFFSKVRNVSSNMQYDSTRSIFVQVTDSSQLKGSSDQSRDHLDSISHEDSEYHTLINQSEIQQLKERSILWDPSFFQTERTEIELDRFPKRLSGDSSMSRLFTEREKPMIIHRLPEEIEEFLGNPTRSIRSFFSDRWSELHLGSNPTEGSTRDQKLLKKQQDFSFVPSRRSENKEMVDIFRIITYLQNTVSIHPILSDPGCDMVPKDEPDMDSSNKISFLNQNSFFYLFHLFHDRNRGGYTLHHDFESEEKFQEMADLLTLSITEPDLVYHKGSAFSIDSYRLDQKKFLNEVFNSRDESKKKSLLVLPPIFYEENESFYQRIRKKWVQISCGNALEDPKQKRVVFASNNIMKAVNQYRFIQNLIQIQYSTHGYIRNVSNQFFKRSDRNFEYGIQRDQIGNDTLNHRTIMKYTINQHLSNLKKSQKKWFDPLISRTERSTNRYPDAYRYKWSKGSKNLQEHLEHFVAEQKSLFQVVFDRLRINQNSIDWSEVIDKQYFSKSLRFFLSKSLLFLSKSLPFFFVSIGNIPSHRSEIHIYELKGPNDQLCNQLLESIGVQIVHLNKWKSFLLDDHDTSQKSKFLINGGRISPFLFNKIPKWMIESFHTRNNRRKSFDNADSYFSMISHDRDNWLNPAKPFHRSSLISSFYKANRLRFLNNPHHFWFYCNKRFPFYVEKARINKYDLTYGQFLNILFIRKKIFSLCVGKGKKKHVFGERDTISPIESQVSNIFIPNDFPQSGDETYNLYKSFHFPIRPAPFVRRALYSIADISGTPLTEGQIVHFERTYCQPLSDMNPSDSEGKNLHQYFNFNSNMGLIHTPYSEKYLPSEKRKKRSLCLKKCVEKRQMYRTFQRDSTFSNLSKLNLFQTYMPWFLTSAGCKYLNLTLLDTFSDLLPILSISQKWVSIFHDIMRGSDISWPIPQKKLWAILPQWNLISEISSKCLHDLLLSEETIRRHNESPVPLIWAHLRSPNARELLYSILFFLLVAGYLVRTHLLFVSRASSELQTEFEKIKSLMIPSYMIELRKLLDGYPTSERNSFWLKNLFLVALKQFGDSLEEIRGSASGGNMLLGGGPAYGVKSIRSKKKYWNINLVDIMDLISIIPNPINRITFSRNTGHLSRTSKEIYSLIRKRKNVNGDWIDDKIESWVANSDSIDDEEREFLVQFSTLTTEKRIDQILLSLTHSDHLSKNDSGYQMIEQPGSVYLRYLVDIHKKNLMNYEFNRSCIAERRIFLAHSQTITYSQTSCGANSFHFPSPGKPFSLRLALSPSRGILVIGSIGTGRSYLVKYLATNSYVPFITVFPNKFLDDKPKGYLIDDIDIDDSDDIDDSDDIDDSDDIDDDLDTELLTMTNALTMYITPKIDRFDITLPFELAKAMSPCIIWIPNIHDLYVNESNYLSLGLLVNHLSRDCERCSTRNILVIASTHIPQKVDPALIAPNKSNTCIKIRRLLIPQQRKHFFTLSYTRGFYLEKKMFHTNGFGSITMGSNARDLVALTNEALSISITQKKSIIDTNTIRSALHKQTWDLRSQVRSVQDHGILFYQIGRAIAQNVLLSNCPIDPISIYMKKKSCKEGDSYLYKWYFELGTSMKKLTILLYLLSCSAGSVAQDLWSPPGPDEKNGITSYGFVENDSDLVHGLLEVEGVLVGSSPTEKDCSQFYKDRVTLLLRSEPRNPFDMMQNGSYSIVDQRFLYEKYELEFEEGGGEGALDPQQLEEDLFNHIVWAPRIWHPCGNLFDCIERPNELGFPYWARSFRGKRIIYHKEDELEENDSEFLQSGTMQYQTRDRSSKEQGFFRISQFIWDPADPFLFLFKDQPFVSVFSRREFFADQEMPKGLLTSQTNSPTSIYKRWFIKNTQEKHFELLIHRQRWLRTNSSLSNGSFRSNTLSESYQYLSNLFLSNGTLLDQMTKTLLRKRWLFPDEMKHLIHVTGERFPIP.

Residue 1635 to 1642 (GSIGTGRS) coordinates ATP.

Belongs to the Ycf2 family.

It is found in the plastid. The protein resides in the chloroplast stroma. Probable ATPase of unknown function. Its presence in a non-photosynthetic plant (Epifagus virginiana) and experiments in tobacco indicate that it has an essential function which is probably not related to photosynthesis. The polypeptide is Protein Ycf2 (Ranunculus macranthus (Large buttercup)).